Consider the following 267-residue polypeptide: NAD kinase 2 (267 aa).

Catalysis depends on aspartate 52, which acts as the Proton acceptor. Residues 52 to 53 (DG), 124 to 125 (NE), arginine 151, aspartate 153, 164 to 169 (TGYNKS), and alanine 188 each bind NAD(+).

This sequence belongs to the NAD kinase family. Requires a divalent metal cation as cofactor.

The protein resides in the cytoplasm. The catalysed reaction is NAD(+) + ATP = ADP + NADP(+) + H(+). Its function is as follows. Involved in the regulation of the intracellular balance of NAD and NADP, and is a key enzyme in the biosynthesis of NADP. Catalyzes specifically the phosphorylation on 2'-hydroxyl of the adenosine moiety of NAD to yield NADP. This is NAD kinase 2 from Geobacillus kaustophilus (strain HTA426).